The sequence spans 452 residues: Adenylosuccinate synthetase isozyme 1 (452 aa).

A disordered region spans residues 1 to 22 (MSGTRASNDRSSHPGGHKRPRY). Residues 37 to 43 (GDEGKGK) and 65 to 67 (GHT) each bind GTP. The Proton acceptor role is filled by aspartate 38. Mg(2+) contacts are provided by aspartate 38 and glycine 65. Position 38 (aspartate 38) interacts with substrate. IMP contacts are provided by residues 38 to 41 (DEGK), 63 to 66 (NAGH), threonine 158, arginine 172, asparagine 251, threonine 266, and arginine 330. Histidine 66 (proton donor) is an active-site residue. Substrate is bound at residue 326 to 332 (VTTGRKR). GTP-binding positions include arginine 332, 358–360 (KLD), and 440–443 (GVGK).

It belongs to the adenylosuccinate synthetase family. Homodimer. Mg(2+) is required as a cofactor.

Its subcellular location is the cytoplasm. The catalysed reaction is IMP + L-aspartate + GTP = N(6)-(1,2-dicarboxyethyl)-AMP + GDP + phosphate + 2 H(+). Its pathway is purine metabolism; AMP biosynthesis via de novo pathway; AMP from IMP: step 1/2. Component of the purine nucleotide cycle (PNC), which interconverts IMP and AMP to regulate the nucleotide levels in various tissues, and which contributes to glycolysis and ammoniagenesis. Catalyzes the first committed step in the biosynthesis of AMP from IMP. This is Adenylosuccinate synthetase isozyme 1 (adss1) from Xenopus tropicalis (Western clawed frog).